Here is an 805-residue protein sequence, read N- to C-terminus: MGLPALEFSDSFLDSPDFRERLKCHEIELDRTNKFIKELIKDGNMLISALKSLSAAVQKFSQSLQDFQFECIGDAETDDEINIAQSFKEFSQLLNTVEEERRRLIQNADDVLITPLEKFRKEQIGAAKEGKKKFDKETEKYYTVLEKHLSLSSRKKESLLQEADTQISKERQVFYDASLEYVFKIQEVQERKKFEFVEPLLAFLQGLFTFYHEGYELAHEFEPYKQQLQFNLQNTRNNFESTRQEVENLMRRIRSAEQDFKAPGQWTMEGFLYVQEKRPLGCTWTRHYCTYEKGTKMFTMSNSELKTGGKQNGLIMSPPEMFKLKSCIRRRTDSIDKRFCFDIEVVERHGIITLQSLSESNRRLWMEAMDGKEPIYTLPALLSKKEETFLNEAGFNFVRKCIESVEARGINTLGLYRIGGVNSKVQRLMTSVFAAKAPADLDLDPDTWDNKTITSGLKNYLRCLAEPLMTYRLHKDFIMAVKSDDQNYRVCAVHALVYKLPDKNKEMLNLLIKHLHVVSTHSQKNLMTVSNLGVIFGPTLMRSQEETVAAMMNIKFQNIVVEILIENYDKIFHQAPDPNVPLPHPQSHSQSRGGARRSKAICLSSGSRKSRGLYPPALCLADADSDTFSSSPSSTPMGSMESLSSHSSEQNSCSKTGSPSRNKHKASGSLCWTTPSPSTNGPKSPACTTSPDSSSKEDANKTDGEWEEALSTSPGDRSSPASELLHRTLGETAEDQRSLSSCSSLTSLHISEGFRSCHGSIQSLVSRSQRDSLKSLHMPDLPPKDGMRFRDDSSASNGYQRPGSV.

The BAR domain occupies 7–262 (EFSDSFLDSP…IRSAEQDFKA (256 aa)). The stretch at 225-262 (KQQLQFNLQNTRNNFESTRQEVENLMRRIRSAEQDFKA) forms a coiled coil. Residues 265 to 374 (QWTMEGFLYV…WMEAMDGKEP (110 aa)) enclose the PH domain. Positions 376–572 (YTLPALLSKK…ILIENYDKIF (197 aa)) constitute a Rho-GAP domain. Disordered stretches follow at residues 576–600 (PDPNVPLPHPQSHSQSRGGARRSKA), 625–725 (SDTF…SELL), and 765–805 (VSRS…PGSV). The segment covering 626–654 (DTFSSSPSSTPMGSMESLSSHSSEQNSCS) has biased composition (low complexity). Residues 670–693 (LCWTTPSPSTNGPKSPACTTSPDS) are compositionally biased toward polar residues. Residues 694–704 (SSKEDANKTDG) show a composition bias toward basic and acidic residues. A compositionally biased stretch (polar residues) spans 710–721 (LSTSPGDRSSPA). The span at 782–793 (PPKDGMRFRDDS) shows a compositional bias: basic and acidic residues.

In terms of biological role, may influence blood pressure by functioning as a GTPase-activating protein in vascular smooth muscle. This chain is Rho GTPase-activating protein 42, found in Danio rerio (Zebrafish).